A 177-amino-acid chain; its full sequence is Adenine phosphoribosyltransferase (177 aa).

The protein belongs to the purine/pyrimidine phosphoribosyltransferase family. Homodimer.

The protein localises to the cytoplasm. The enzyme catalyses AMP + diphosphate = 5-phospho-alpha-D-ribose 1-diphosphate + adenine. Its pathway is purine metabolism; AMP biosynthesis via salvage pathway; AMP from adenine: step 1/1. Its function is as follows. Catalyzes a salvage reaction resulting in the formation of AMP, that is energically less costly than de novo synthesis. The polypeptide is Adenine phosphoribosyltransferase (Chlorobium phaeobacteroides (strain DSM 266 / SMG 266 / 2430)).